The following is a 320-amino-acid chain: N-acetylneuraminate lyase (320 aa).

Aceneuramate-binding residues include Thr51 and Thr52. The active-site Proton donor is Tyr143. Lys173 acts as the Schiff-base intermediate with substrate in catalysis. Residues Ser175, Gly199, Asp201, Glu202, and Ser218 each coordinate aceneuramate.

It belongs to the DapA family. NanA subfamily. As to quaternary structure, homotetramer. Isoform 2 is expressed in placenta, liver, kidney, pancreas, spleen, thymus, ovary, small intestine and peripheral blood leukocyte.

It is found in the cytoplasm. The enzyme catalyses aceneuramate = aldehydo-N-acetyl-D-mannosamine + pyruvate. It functions in the pathway amino-sugar metabolism; N-acetylneuraminate degradation. Functionally, catalyzes the cleavage of N-acetylneuraminic acid (sialic acid) to form pyruvate and N-acetylmannosamine via a Schiff base intermediate. It prevents sialic acids from being recycled and returning to the cell surface. Involved in the N-glycolylneuraminic acid (Neu5Gc) degradation pathway. Although human is not able to catalyze formation of Neu5Gc due to the inactive CMAHP enzyme, Neu5Gc is present in food and must be degraded. The protein is N-acetylneuraminate lyase of Homo sapiens (Human).